The chain runs to 475 residues: Probable UDP-N-acetylglucosamine pyrophosphorylase (475 aa).

Positions 103–106 (LAGG) match the Substrate binding motif. Residues 103–106 (LAGG), Lys117, Gln194, and Gly220 each bind UTP. Residue Asn221 coordinates substrate. Asp251 is a binding site for UTP. Positions 301–302 (EY) match the Substrate binding motif. Lys378 is a binding site for UTP. Ser405 carries the phosphoserine modification. A substrate-binding site is contributed by Lys410.

It belongs to the UDPGP type 1 family.

The protein resides in the cytoplasm. It localises to the nucleus. The catalysed reaction is N-acetyl-alpha-D-glucosamine 1-phosphate + UTP + H(+) = UDP-N-acetyl-alpha-D-glucosamine + diphosphate. Its pathway is nucleotide-sugar biosynthesis; UDP-N-acetyl-alpha-D-glucosamine biosynthesis; UDP-N-acetyl-alpha-D-glucosamine from N-acetyl-alpha-D-glucosamine 1-phosphate: step 1/1. This chain is Probable UDP-N-acetylglucosamine pyrophosphorylase (uap1), found in Schizosaccharomyces pombe (strain 972 / ATCC 24843) (Fission yeast).